A 2026-amino-acid chain; its full sequence is E3 ubiquitin-protein ligase TRIP12 (2026 aa).

3 stretches are compositionally biased toward polar residues: residues 1 to 10 (MSNRPNSNPG), 32 to 42 (GRNSLSLSVGS), and 73 to 84 (SSVSEPNITFSP). Residues 1-437 (MSNRPNSNPG…SGESESDDSE (437 aa)) are disordered. Low complexity-rich tracts occupy residues 94 to 112 (SSHFSDSSASGPSAPAISP), 135 to 161 (AEPAPARALSKKSSSYPGPSGASSTPS), 171 to 188 (LLSSSSSSSLPSSSSAAG), and 199 to 241 (AAKP…SSAA). Polar residues predominate over residues 359–371 (QKTTGSCASTSRR). Positions 379 to 391 (GAAEARRQEKMAD) are enriched in basic and acidic residues. Over residues 392–404 (SDNNQDGANSSAA) the composition is skewed to polar residues. Low complexity predominate over residues 412-430 (GASASSSVAGAVGMTTSGE). In terms of domain architecture, WWE spans 789 to 876 (MLKKGSAQTT…DPELAKCFIK (88 aa)). 2 disordered regions span residues 1008 to 1123 (SNVT…SVSN) and 1441 to 1470 (GCKDAVGGKRGRAQTAPTKTSPRNAKKQDE). Over residues 1040 to 1053 (KRKRLPKRGPRRPK) the composition is skewed to basic residues. Basic and acidic residues predominate over residues 1056–1065 (PPRDDDKVDN). Positions 1068-1079 (KSPTTTQSPKSS) are enriched in low complexity. A compositionally biased stretch (polar residues) spans 1094-1104 (TQANSANSEPS). The segment at 1530–1604 (EIIPTGEFIN…AMQRLLDTNP (75 aa)) is K-box. The region spanning 1919-2026 (PDHGYTHDSR…REGQQSFHLS (108 aa)) is the HECT domain. Residue C1993 is the Glycyl thioester intermediate of the active site.

The protein belongs to the UPL family. K-HECT subfamily.

The protein localises to the nucleus. The protein resides in the nucleoplasm. The catalysed reaction is S-ubiquitinyl-[E2 ubiquitin-conjugating enzyme]-L-cysteine + [acceptor protein]-L-lysine = [E2 ubiquitin-conjugating enzyme]-L-cysteine + N(6)-ubiquitinyl-[acceptor protein]-L-lysine.. It participates in protein modification; protein ubiquitination. Functionally, E3 ubiquitin-protein ligase involved in ubiquitin fusion degradation (UFD) pathway and regulation of DNA repair. Part of the ubiquitin fusion degradation (UFD) pathway, a process that mediates ubiquitination of protein at their N-terminus, regardless of the presence of lysine residues in target proteins. Acts as a key regulator of DNA damage response by acting as a suppressor of RNF168, an E3 ubiquitin-protein ligase that promotes accumulation of 'Lys-63'-linked histone H2A and H2AX at DNA damage sites, thereby acting as a guard against excessive spreading of ubiquitinated chromatin at damaged chromosomes. This chain is E3 ubiquitin-protein ligase TRIP12 (trip12), found in Danio rerio (Zebrafish).